We begin with the raw amino-acid sequence, 294 residues long: 7,8-dihydropterin-6-methyl-4-(beta-D-ribofuranosyl)-aminobenzene-5'-phosphate synthase (294 aa).

Residues glutamate 116, aspartate 186, lysine 228, and histidine 265 each coordinate substrate.

It belongs to the metallo-beta-lactamase superfamily. Mg(2+) is required as a cofactor.

It carries out the reaction 4-(beta-D-ribofuranosyl)aminobenzene 5'-phosphate + (7,8-dihydropterin-6-yl)methyl diphosphate = N-[(7,8-dihydropterin-6-yl)methyl]-4-(beta-D-ribofuranosyl)aniline 5'-phosphate + diphosphate. It participates in cofactor biosynthesis; 5,6,7,8-tetrahydromethanopterin biosynthesis. Functionally, catalyzes the condensation of 6-hydroxymethyl-7,8-dihydropterin pyrophosphate (DHPP) with 4-(beta-D-ribofuranosyl)-aminobenzene-5'-phosphate (beta-RFA-P) to form 7,8-dihydropterin-6-methyl-4-(beta-D-ribofuranosyl)-aminobenzene-5'-phosphate, a precursor in the biosynthesis of 5,6,7,8-tetrahydromethanopterin (H4MPT). To a lesser extent, is able to condense beta-RFA-P with another arylamine, 1-(4-aminophenyl)-1-deoxy-D-ribitol (APDR), to form 7,8-dihydropterin-6-methyl-1-(4-aminophenyl)-1-deoxy-D-ribitol. Dephosphorylated beta-RFA-P is not a substrate. In Methanocaldococcus jannaschii (strain ATCC 43067 / DSM 2661 / JAL-1 / JCM 10045 / NBRC 100440) (Methanococcus jannaschii), this protein is 7,8-dihydropterin-6-methyl-4-(beta-D-ribofuranosyl)-aminobenzene-5'-phosphate synthase.